The sequence spans 626 residues: E3 ubiquitin-protein ligase CHFR (626 aa).

Residues 34 to 85 form the FHA domain; sequence WTIGRKKACDLSFPGNKLVSGEHCKITVNEESGSVSLEDTSTNGTVINKLKV. Composition is skewed to polar residues over residues 123 to 133 and 140 to 149; these read EDSMQNPADTS and TQTLSSQDDQ. Disordered stretches follow at residues 123-170 and 188-229; these read EDSM…TPTT and PGVQ…MRTE. Residues 158–170 are compositionally biased toward low complexity; the sequence is STSTSSLFSTPTT. The segment covering 194-203 has biased composition (basic and acidic residues); the sequence is SGEKSGESLE. The RING-type zinc finger occupies 267–306; sequence CIICQELLHDCVSLQPCMHTFCAACYSGWMERSSLCPTCR. 2 disordered regions span residues 351 to 387 and 402 to 428; these read DMLQ…ISQP and IQPP…TSTN. Acidic residues predominate over residues 363-381; that stretch reads DEEGSSEDLLELSDVDSES. The span at 416-428 shows a compositional bias: polar residues; it reads SRTQGDAPSTSTN. The PBZ-type zinc finger occupies 595–617; it reads PNCYWGRNCRTQVKAHHAMKFNH.

This sequence belongs to the CHFR family.

Its subcellular location is the nucleus. The protein resides in the PML body. The enzyme catalyses S-ubiquitinyl-[E2 ubiquitin-conjugating enzyme]-L-cysteine + [acceptor protein]-L-lysine = [E2 ubiquitin-conjugating enzyme]-L-cysteine + N(6)-ubiquitinyl-[acceptor protein]-L-lysine.. The protein operates within protein modification; protein ubiquitination. Functionally, E3 ubiquitin-protein ligase that functions in the antephase checkpoint by actively delaying passage into mitosis in response to microtubule poisons. Acts in early prophase before chromosome condensation, when the centrosome move apart from each other along the periphery of the nucleus. Probably involved in signaling the presence of mitotic stress caused by microtubule poisons by mediating the 'Lys-48'-linked ubiquitination of target proteins, leading to their degradation by the proteasome. May also promote the formation of 'Lys-63'-linked polyubiquitin chains and functions with the specific ubiquitin-conjugating ubc13-mms2 (ube2n-ube2v2) heterodimer. Substrates that are polyubiquitinated at 'Lys-63' are usually not targeted for degradation, but are rather involved in signaling cellular stress. This chain is E3 ubiquitin-protein ligase CHFR (chfr), found in Xenopus tropicalis (Western clawed frog).